Here is an 887-residue protein sequence, read N- to C-terminus: Serine/threonine-protein kinase greatwall (887 aa).

One can recognise a Protein kinase domain in the interval 32 to 843 (FGIVKPISRG…LKDLKAHPLF (812 aa)). ATP contacts are provided by residues 38-46 (ISRGAFGKV) and Lys61. Asp155 serves as the catalytic Proton acceptor. Thr221 and Thr244 each carry phosphothreonine; by CDK1; in vitro. The interval 321–353 (DAEAPPYFNSSRVKDSSSEQARSKKPTGSSASQ) is disordered. Position 363 is a phosphoserine; by CDK1; in vitro (Ser363). Residues 410–435 (PKDFDKTGQGELGKFTSSPDSPPWLA) are disordered. Ser465 bears the Phosphoserine; by CDK1; in vitro mark. The segment at 556 to 624 (RDGEVSSTSE…EITPDNKGIP (69 aa)) is disordered. Positions 575–587 (QDSSSTGMSVTEN) are enriched in polar residues. Residues 588–604 (QIDRDLSHVDKSIKELS) are compositionally biased toward basic and acidic residues. The segment covering 608 to 617 (SQSENSEEIT) has biased composition (acidic residues). A phosphoserine; by CDK1; in vitro mark is found at Ser654 and Ser677. Thr748 is modified (phosphothreonine; by CDK1). The AGC-kinase C-terminal domain occupies 844-887 (HGMEWEELQYQPMSFIPQPDDETDTTYFEARNNAQHLKVSGFSL).

It belongs to the protein kinase superfamily. AGC Ser/Thr protein kinase family. In terms of assembly, interacts with arpp19 and ensa, leading to their phosphorylation. Phosphorylation at Thr-748 by CDK1 during M phase activates its kinase activity. Not active during other phases of the cell cycle. Has the ability to autophosphorylate.

The protein localises to the cytoplasm. It localises to the cytoskeleton. The protein resides in the microtubule organizing center. Its subcellular location is the centrosome. It is found in the nucleus. It carries out the reaction L-seryl-[protein] + ATP = O-phospho-L-seryl-[protein] + ADP + H(+). It catalyses the reaction L-threonyl-[protein] + ATP = O-phospho-L-threonyl-[protein] + ADP + H(+). Functionally, serine/threonine kinase that plays a key role in M phase by acting as a regulator of mitosis entry and maintenance. Acts by promoting the inactivation of protein phosphatase 2A (PP2A) during M phase: does not directly inhibit PP2A but acts by mediating phosphorylation and subsequent activation of arpp19 and ensa at 'Ser-67', 2 phosphatase inhibitors that specifically inhibit the ppp2r2d (PR55-delta) subunit of PP2A. Inactivation of PP2A during M phase is essential to keep cyclin-B1-CDK1 activity high. Following DNA damage, it is also involved in checkpoint recovery by being inhibited. The polypeptide is Serine/threonine-protein kinase greatwall (mastl) (Xenopus laevis (African clawed frog)).